The primary structure comprises 634 residues: Chaperone protein HtpG (634 aa).

The a; substrate-binding stretch occupies residues 1-342 (MSVETQKETL…SNDLSLNVSR (342 aa)). Residues 343–559 (EILQKDPVID…EQDLGLQMRQ (217 aa)) are b. The interval 560 to 634 (ILEASGQKVP…LNKLLVELSA (75 aa)) is c.

Belongs to the heat shock protein 90 family. In terms of assembly, homodimer.

Its subcellular location is the cytoplasm. Molecular chaperone. Has ATPase activity. The sequence is that of Chaperone protein HtpG from Pseudomonas paraeruginosa (strain DSM 24068 / PA7) (Pseudomonas aeruginosa (strain PA7)).